The following is a 503-amino-acid chain: Cytochrome P450 3A17 (503 aa).

Position 442 (C442) interacts with heme.

Belongs to the cytochrome P450 family. The cofactor is heme.

The protein localises to the endoplasmic reticulum membrane. It localises to the microsome membrane. It carries out the reaction an organic molecule + reduced [NADPH--hemoprotein reductase] + O2 = an alcohol + oxidized [NADPH--hemoprotein reductase] + H2O + H(+). In terms of biological role, cytochromes P450 are a group of heme-thiolate monooxygenases. In liver microsomes, this enzyme is involved in an NADPH-dependent electron transport pathway. It oxidizes a variety of structurally unrelated compounds, including steroids, fatty acids, and xenobiotics. This Cavia porcellus (Guinea pig) protein is Cytochrome P450 3A17 (CYP3A17).